Consider the following 303-residue polypeptide: Dehydrodolichyl diphosphate synthase 1 (303 aa).

The helical transmembrane segment at 14–34 (LLFLFLIPCLFITSYIGFPVF) threads the bilayer.

Belongs to the UPP synthase family. Mg(2+) serves as cofactor. In terms of tissue distribution, expressed in low levels in the whole plant. Preferentially expressed in roots.

It is found in the endoplasmic reticulum membrane. The catalysed reaction is n isopentenyl diphosphate + (2E,6E)-farnesyl diphosphate = a di-trans,poly-cis-polyprenyl diphosphate + n diphosphate. Its pathway is protein modification; protein glycosylation. Functionally, catalyzes cis-prenyl chain elongation to produce the polyprenyl backbone of dolichol, a glycosyl carrier-lipid required for the biosynthesis of several classes of glycoprotein. The chain is Dehydrodolichyl diphosphate synthase 1 (DPS) from Arabidopsis thaliana (Mouse-ear cress).